The sequence spans 479 residues: Glutamyl-tRNA(Gln) amidotransferase subunit A (479 aa).

Catalysis depends on charge relay system residues K71 and S146. S170 acts as the Acyl-ester intermediate in catalysis.

Belongs to the amidase family. GatA subfamily. Heterotrimer of A, B and C subunits.

The catalysed reaction is L-glutamyl-tRNA(Gln) + L-glutamine + ATP + H2O = L-glutaminyl-tRNA(Gln) + L-glutamate + ADP + phosphate + H(+). Its function is as follows. Allows the formation of correctly charged Gln-tRNA(Gln) through the transamidation of misacylated Glu-tRNA(Gln) in organisms which lack glutaminyl-tRNA synthetase. The reaction takes place in the presence of glutamine and ATP through an activated gamma-phospho-Glu-tRNA(Gln). The protein is Glutamyl-tRNA(Gln) amidotransferase subunit A of Lactobacillus johnsonii (strain CNCM I-12250 / La1 / NCC 533).